Reading from the N-terminus, the 660-residue chain is DNA ligase (660 aa).

Residues 33-37 (DFVYD), 82-83 (SL), and E110 each bind NAD(+). The N6-AMP-lysine intermediate role is filled by K112. NAD(+) contacts are provided by R133, E167, K281, and K305. Residues C396, C399, C412, and C417 each coordinate Zn(2+). Residues 583 to 660 (GENKLLAGKK…SFEDIKSYLD (78 aa)) form the BRCT domain.

Belongs to the NAD-dependent DNA ligase family. LigA subfamily. Requires Mg(2+) as cofactor. It depends on Mn(2+) as a cofactor.

The enzyme catalyses NAD(+) + (deoxyribonucleotide)n-3'-hydroxyl + 5'-phospho-(deoxyribonucleotide)m = (deoxyribonucleotide)n+m + AMP + beta-nicotinamide D-nucleotide.. In terms of biological role, DNA ligase that catalyzes the formation of phosphodiester linkages between 5'-phosphoryl and 3'-hydroxyl groups in double-stranded DNA using NAD as a coenzyme and as the energy source for the reaction. It is essential for DNA replication and repair of damaged DNA. This Borreliella burgdorferi (strain ZS7) (Borrelia burgdorferi) protein is DNA ligase.